We begin with the raw amino-acid sequence, 390 residues long: ATP-sensitive inward rectifier potassium channel 11 (390 aa).

Residues 1 to 65 (MLSRKGIIPE…LQDVFTTLVD (65 aa)) lie on the Cytoplasmic side of the membrane. The ATP site is built by asparagine 48 and arginine 50. The chain crosses the membrane as a helical span at residues 66–92 (LKWTHTLLIFTMSFLCSWLLFAMVWWL). Topologically, residues 93-116 (IAFAHGDLAPGEGAAVPCVTSIHS) are extracellular. Cysteine 110 and cysteine 142 are disulfide-bonded. An intramembrane region (discontinuously helical; Pore-forming) is located at residues 117–133 (FSSAFLFSIEVQVTIGF). Positions 130 and 133 each coordinate K(+). Positions 130–135 (TIGFGG) match the Selectivity filter motif. Residues 134–142 (GGRMVTEEC) are Extracellular-facing. Residues 143–171 (PLAILILIVQNIVGLMINAIMLGCIFMKT) traverse the membrane as a helical segment. Topologically, residues 172–390 (AQAHRRAETL…KFSISPDSLS (219 aa)) are cytoplasmic. Arginine 176 is a binding site for a 1,2-diacyl-sn-glycero-3-phospho-(1D-myo-inositol-4,5-bisphosphate). Tyrosine 330 contributes to the ATP binding site. A Phosphothreonine; by MAPK1 modification is found at threonine 341. Serine 385 carries the post-translational modification Phosphoserine; by MAPK1.

It belongs to the inward rectifier-type potassium channel (TC 1.A.2.1) family. KCNJ11 subfamily. As to quaternary structure, homotetramer; the homotetramer binds four ATP molecules (one ATP per subunit). Forms an heterooctamer with ABCC8/SUR1; one KCNJ11 homotetramer interacts with four ABCC8/SUR1 molecules. Interacts with ABCC9/SUR2. Post-translationally, phosphorylation by MAPK1 results in changes in channel gating that destabilize the closed states and reduce the ATP sensitivity.

The protein localises to the membrane. It catalyses the reaction K(+)(in) = K(+)(out). With respect to regulation, KATP channels are regulated by cytoplasmic ATP/ADP ratios; ATP inhibits the channel by closing the pore, while ADP activates the channel. Activated by phosphatidylinositol 4,5-biphosphate (PtdIns(4,5)P2). Functionally, inward rectifier potassium channel that forms the pore of ATP-sensitive potassium channels (KATP), regulating potassium permeability as a function of cytoplasmic ATP and ADP concentrations in many different cells. Inward rectifier potassium channels are characterized by a greater tendency to allow potassium to flow into the cell rather than out of it. Their voltage dependence is regulated by the concentration of extracellular potassium; as external potassium is raised, the voltage range of the channel opening shifts to more positive voltages. The inward rectification is mainly due to the blockage of outward current by internal magnesium. Can be blocked by extracellular barium. In pancreatic cells, it forms KATP channels with ABCC8/SUR1. Can form cardiac and smooth muscle-type KATP channels with ABCC9. This is ATP-sensitive inward rectifier potassium channel 11 (KCNJ11) from Oryctolagus cuniculus (Rabbit).